The sequence spans 2543 residues: MAQEPRIAVIGLSYRAPGVKGKSLWEYLSQARSAWTSVPADRYDQSAYYQAGGQKSGVVGTKGAHFIDSPFGFDAAFFNMRADEAKHADPQHRLMLEVALEAAEDAGKTFPDLAGKKIGVFVGSGQHEYAQRLGDDEHAIQTFSGTGAAPCMAANRVSYFFDIDGPSVVADAACASSVYAADMAVRALRNGECDGAFVGSASLNLSPAGWLVLEKTGALSEHGRSYSYDTKASGFGRGEGAACLLLKRYDDAIRDGDPVQALILSSACNHSGRSDGITMPNGLAQQKLLWSVHNAAGVDPSDTPVVEGHGTGTAVGDPIEAGAFTAVLARNRTANNPIYLGSLKSNFGHLEGASGVLAMVKAIMMVNKGIVLPTAGFEKINPKIEGHEKIKIAEMPLPWPKNEPRRCIVTNFGFGGSNSAILLEGPPPKAVSDDHALNGAAGTNGHALNGTNGTNGHALNGANGTNGHAINGANGTNGHHENGNGVATQNQRLYVFSAKTQKSLTSYLSTFDEYLDEAPESSEFAKDLSYTLGQRRNHYPYRVAAVADSIETLQEKLSALKPSRTKERGVLFVFTGQGAQHAEMASGLESFEIFNKTLQEAEMQLQTMGAPWSLIEELRKPSSESRVDDAEISQPACTAVQLALVALLKEWGVTPAAVTGHSSGEIAAAYAAGLITFQQAIAASYFRGQAAAQLAAKQQPEEKGAMLALGVSFEEASKLIEEHAEAYATVAAVNSPNSVTISGDQSAIDNVHKAAEAKGLFARKLKVQMAYHSRHMEAVAASYLEDIKPYFQEDAPFLDKKSTTNPAFVSSVTGRVVDRIEASYWVKNLVQPVMFMDAVHGLLAPQHLGTGKAAQALPRVVIEVGPHAALKNPIKQTAELVQVQQNWTPASFTYLPTLFRGTDATQAVLELASSLFTLGARVELAAVNQTDKHNAEVLTELPAYAWDKTDYELRPRSTNDKYFPGENYHPLLGRKISPNASGERTYRQVFTLDEMPWIRDHVVGGATIFPMTGYMSCAIEAARRTLSTPAAAFLVTDFHVVRSLEIHEEETVDMTTKLRPAAIGEGAFSTKVWSFEMTTWAEESGWTKHSWGQIEAEMTDMSMDTPTFRASLPLVNKTTGLKEHDINAEYQTAGLRATLYGPSFRNNVKFYEGKGYTILEHRLRDLGEALRDPYARGSPVSTDPPTLDGFLQGGGPLQYDEHGRRPAQMPNYISRFRVSNKIPSDPSHRFDVVMRRLDYDVRGGRMHVGVAAFSRGPNDELTPIAEWESCAFRNIGSAEEVIDPSATVPDNWSWEVLPRYDFVPQDQLRKKLCDAVGELGVEEDIRIRKGEEAACYYIEKALKETADLDYSKLPPHLARFVRWGYKTVAEYDLDYSRGEPTALLNEVRTSDAQGELICIMGEHIVDILRGKIEPLEIMLTDGRLTRHYEADVTNAHLSKVLGYLTEYLADLEPNQRILEIGGGTAGTTLPVLEGLSRGRDELAVLDYTFTDISTGFFEMARKKLSDWSRRITYKRLDITQDPSDQGFEQQDYDVVIAANVLHATADMVKTMTHVRSLLKPGGKLILLEAMRHPASVLPFSLLPGWWEAEDKYRDHEEGPMMPATVWNQLLLDSGFSGVDVVLPSRYGTDKPFVSILCSTRIGKQDNSRPITICGPFLDENEVEFAQSVADLISKELGYPTEMKPYAEIDPEDDPYYVFIDSPHESALQDMDQEKFKSLQTLLLHNTGLLWVTPEGASPDAKIIQGMVRTLRMEVDLKNLILFEDVPCTSQGAAGIMKLATKLRDSELSRDQDFDFAWQDGAIHLPRMRQLKEVKEQFAVEEGVAYRKMQNLWDNNDRGLEMTIDAAGSPDTIYFQRTDVSNIGEDEVVVRVEAAGVGHRDLEVILGSIPWAPPSYEGAGKIIRTGSRISHLREGDDVFFLTPDSSALATEVKLPSWLVGKIPQGITIHDAATLPLAYSLAVLALIQTARLRKNETVLIHAAAGAVGQACVALAQNVGAHVYVTAGNEAKREFLHEKFGIPKDRIFSSRTPEFRDQILSATANKGIDVIVNSLGGELMTETWALTAPFGRFIEIGKKDAFQNNNLPMKPFNRNVTYTGIDLRDLYQFRRDDIKDVFTEVVTLLQRGNIQPIGPVTTTPISQFASALRKLKSGEHMGKMVITLGKDDTVVAETALRPLNVTLKPDATYLVAGGTRGIGLDLAYWMIDHGARYIVLLGRSGASGPEAQKILNRYKDTDVCVKIFSCNVGHRDELAEVVEAIKDLPPVRGVVHSALLLSDKLFVNSTLEDWEIITTPRVKGAWNLHELMPDNLDFFVALSSFNGDTGNLGQAIYAGTAGFYNAFSQYRNSRGQYTVSIALPVVLDVGYVADNNLSEILKESLGVAITMADIRAIFGGILLGPSSPFVYNGRAQTFMVYIDGQPVQNGGWKYFHPVHTKVRLMSDRRRVKIASGGVDQHSASWTTAEDPLIGLTEAMITKVSAMTMIEREEVLPDAPLTSYNLDSLVSVELRNWIRRETAVELTLSAIMQADSLRALATEILSQRKAE.

Positions 4–425 (EPRIAVIGLS…GSNSAILLEG (422 aa)) constitute a Ketosynthase family 3 (KS3) domain. Catalysis depends on for beta-ketoacyl synthase activity residues Cys174, His309, and His349. The segment at 573–902 (VFTGQGAQHA…TYLPTLFRGT (330 aa)) is malonyl-CoA:ACP transacylase (MAT) domain. Ser662 acts as the For malonyltransferase activity in catalysis. An N-terminal hotdog fold region spans residues 969 to 1101 (HPLLGRKISP…GQIEAEMTDM (133 aa)). Residues 969–1281 (HPLLGRKISP…FRNIGSAEEV (313 aa)) form the PKS/mFAS DH domain. A dehydratase (DH) domain region spans residues 969–1283 (HPLLGRKISP…NIGSAEEVID (315 aa)). The active-site Proton acceptor; for dehydratase activity is His1001. A C-terminal hotdog fold region spans residues 1119–1281 (TGLKEHDINA…FRNIGSAEEV (163 aa)). The Proton donor; for dehydratase activity role is filled by Asp1188. Residues 1438–1631 (SKVLGYLTEY…LPSRYGTDKP (194 aa)) are methyltransferase (CMet) domain. The tract at residues 1847-2159 (GSPDTIYFQR…SGEHMGKMVI (313 aa)) is enoylreductase (ER) domain. Positions 2184–2359 (ATYLVAGGTR…YTVSIALPVV (176 aa)) are ketoreductase (KR) domain. A Carrier domain is found at 2463–2540 (DPLIGLTEAM…ALATEILSQR (78 aa)). An O-(pantetheine 4'-phosphoryl)serine modification is found at Ser2500.

The protein operates within secondary metabolite biosynthesis. Functionally, highly reducing polyketide synthase; part of the gene cluster that mediates the biosynthesis of phomenoic acid, a long chain aliphatic carboxylic acid that does not appear to be essential for pathogenicity but may play a role in allowing to outcompete other fungi in the environmental niche via its antifungal properties. The polyketide synthase produces the long methylated aliphatic carboxylic acid chain of phomenoic acid. The cluster-specific cytochrome P450 monooxygenase may then hydroxylate the methyl group of carbon 31. The putative dehydrogenase YogA, which has no obvious role in phomenoic acid biosynthesis, may further modify phomenoic acid to produce a compound not identified yet. The chain is Highly reducing polyketide synthase PKS2 from Leptosphaeria maculans (strain JN3 / isolate v23.1.3 / race Av1-4-5-6-7-8) (Blackleg fungus).